The following is a 509-amino-acid chain: Putative thymidine phosphorylase (509 aa).

It belongs to the thymidine/pyrimidine-nucleoside phosphorylase family. Type 2 subfamily.

The enzyme catalyses thymidine + phosphate = 2-deoxy-alpha-D-ribose 1-phosphate + thymine. The polypeptide is Putative thymidine phosphorylase (Bradyrhizobium sp. (strain ORS 278)).